The sequence spans 434 residues: MAATDIARQVGEGCRTVPLAGHVGFDSLPDQLVNKSVSQGFCFNILCVGETGLGKSTLMDTLFNTKFEGEPATHTQPGVQLQSNTYDLQESNVRLKLTIVSTVGFGDQINKEDSYKPIVEFIDAQFEAYLQEELKIRRVLHTYHDSRIHVCLYFIAPTGHSLKSLDLVTMKKLDSKVNIIPIIAKADAISKSELTKFKIKITSELVSNGVQIYQFPTDDESVAEINGTMNAHLPFAVIGSTEELKIGNKMMRARQYPWGTVQVENEAHCDFVKLREMLIRVNMEDLREQTHTRHYELYRRCKLEEMGFKDTDPDSKPFSLQETYEAKRNEFLGELQKKEEEMRQMFVQRVKEKEAELKEAEKELHEKFDRLKKLHQDEKKKLEDKKKSLDDEVNAFKQRKTAAELLQSQGSQAGGSQTLKRDKEKKNNPWLCTE.

The residue at position 2 (Ala-2) is an N-acetylalanine. Ser-27 bears the Phosphoserine mark. One can recognise a Septin-type G domain in the interval 39-305 (QGFCFNILCV…ELYRRCKLEE (267 aa)). The tract at residues 49–56 (GETGLGKS) is G1 motif. GTP-binding positions include 49–56 (GETGLGKS), Gly-104, 185–193 (KADAISKSE), Gly-239, and Arg-254. Residues 101-104 (STVG) are G3 motif. Residues 184–187 (AKAD) are G4 motif. Positions 321-409 (QETYEAKRNE…KTAAELLQSQ (89 aa)) form a coiled coil. Position 367 is an N6-acetyllysine (Lys-367). The disordered stretch occupies residues 405–434 (LLQSQGSQAGGSQTLKRDKEKKNNPWLCTE). Low complexity predominate over residues 407 to 417 (QSQGSQAGGSQ). The residue at position 416 (Ser-416) is a Phosphoserine. At Thr-418 the chain carries Phosphothreonine.

The protein belongs to the TRAFAC class TrmE-Era-EngA-EngB-Septin-like GTPase superfamily. Septin GTPase family. In terms of assembly, septins polymerize into heterooligomeric protein complexes that form filaments, and associate with cellular membranes, actin filaments and microtubules. GTPase activity is required for filament formation. Filaments are assembled from asymmetrical heterotrimers, composed of SEPTIN2, SEPTIN6 and SEPTIN7 that associate head-to-head to form a hexameric unit. Within the trimer, directly interacts with SEPTIN2 and SEPTIN7. Also interacts with SEPTIN9 and SEPTIN12. Interaction with SEPTIN12 alters filament structure. Component of a septin core octameric complex consisting of SEPTIN12, SEPTIN7, SEPTIN6 and SEPTIN2 or SEPTIN4 in the order 12-7-6-2-2-6-7-12 or 12-7-6-4-4-6-7-12 and located in the sperm annulus. Interacts with SOCS7. Interacts with HNRNPA1. As to quaternary structure, (Microbial infection) Interacts with HCV NS5B. As to expression, widely expressed.

The protein resides in the cytoplasm. Its subcellular location is the cytoskeleton. The protein localises to the spindle. It localises to the chromosome. It is found in the centromere. The protein resides in the kinetochore. Its subcellular location is the cleavage furrow. The protein localises to the midbody. It localises to the cell projection. It is found in the cilium. The protein resides in the flagellum. In terms of biological role, filament-forming cytoskeletal GTPase. Required for normal organization of the actin cytoskeleton. Involved in cytokinesis. May play a role in HCV RNA replication. Forms a filamentous structure with SEPTIN12, SEPTIN6, SEPTIN2 and probably SEPTIN4 at the sperm annulus which is required for the structural integrity and motility of the sperm tail during postmeiotic differentiation. The sequence is that of Septin-6 from Homo sapiens (Human).